Consider the following 565-residue polypeptide: Zinc finger protein 143 (565 aa).

7 consecutive C2H2-type zinc fingers follow at residues 230–254 (FRCD…ERSH), 260–284 (YQCD…VRTH), 290–314 (YRCS…VRTH), 320–344 (FKCP…IRTH), 350–374 (YYCS…VRIH), 380–404 (YVCT…HVVH), and 410–433 (YNCN…RTAH).

It belongs to the GLI C2H2-type zinc-finger protein family.

The protein localises to the nucleus. Transcriptional activator. Activates the gene for selenocysteine tRNA (tRNAsec). Binds to the activator element (AE) motif of the selenocysteine tRNA gene promoter. This is Zinc finger protein 143 (znf143) from Xenopus laevis (African clawed frog).